Reading from the N-terminus, the 86-residue chain is Translation initiation factor IF-1 2 (86 aa).

In terms of domain architecture, S1-like spans 1 to 72 (MAKEELLEME…SKGRITFRHI (72 aa)).

It belongs to the IF-1 family. Component of the 30S ribosomal translation pre-initiation complex which assembles on the 30S ribosome in the order IF-2 and IF-3, IF-1 and N-formylmethionyl-tRNA(fMet); mRNA recruitment can occur at any time during PIC assembly.

It localises to the cytoplasm. One of the essential components for the initiation of protein synthesis. Stabilizes the binding of IF-2 and IF-3 on the 30S subunit to which N-formylmethionyl-tRNA(fMet) subsequently binds. Helps modulate mRNA selection, yielding the 30S pre-initiation complex (PIC). Upon addition of the 50S ribosomal subunit IF-1, IF-2 and IF-3 are released leaving the mature 70S translation initiation complex. This chain is Translation initiation factor IF-1 2, found in Polynucleobacter asymbioticus (strain DSM 18221 / CIP 109841 / QLW-P1DMWA-1) (Polynucleobacter necessarius subsp. asymbioticus).